The following is a 293-amino-acid chain: HTH-type transcriptional regulator HdfR (293 aa).

An HTH lysR-type domain is found at 1 to 58 (MDTELLKTFLEVSRTRHFGRAAESLYLTQSAVSFRIRQLENQLGANLFTRHRNNIRLT). A DNA-binding region (H-T-H motif) is located at residues 18 to 37 (FGRAAESLYLTQSAVSFRIR).

It belongs to the LysR transcriptional regulatory family.

Its function is as follows. Negatively regulates the transcription of the flagellar master operon flhDC by binding to the upstream region of the operon. The polypeptide is HTH-type transcriptional regulator HdfR (Yersinia enterocolitica serotype O:8 / biotype 1B (strain NCTC 13174 / 8081)).